Here is a 484-residue protein sequence, read N- to C-terminus: Putative myrosinase 6 (484 aa).

N-linked (GlcNAc...) asparagine glycosylation occurs at Asn-28. A beta-D-glucoside contacts are provided by residues Gln-39, His-140, and 184 to 185; that span reads NQ. Cys-204 and Cys-207 form a disulfide bridge. The N-linked (GlcNAc...) asparagine glycan is linked to Asn-260. A beta-D-glucoside-binding positions include Tyr-321, Trp-440, 447–448, and Phe-456; that span reads EF. The N-linked (GlcNAc...) asparagine glycan is linked to Asn-462.

This sequence belongs to the glycosyl hydrolase 1 family.

It catalyses the reaction a thioglucoside + H2O = a sugar + a thiol.. In Arabidopsis thaliana (Mouse-ear cress), this protein is Putative myrosinase 6.